Consider the following 419-residue polypeptide: RNA polymerase sigma factor sigD, chloroplastic (419 aa).

The transit peptide at methionine 1–cysteine 52 directs the protein to the chloroplast. The short motif at aspartate 207–alanine 220 is the Polymerase core binding element. Positions phenylalanine 377–glycine 396 form a DNA-binding region, H-T-H motif.

This sequence belongs to the sigma-70 factor family. In terms of tissue distribution, mostly expressed in leaves, and to a lesser extent in roots. Present in seedlings.

It localises to the plastid. Its subcellular location is the chloroplast. Its function is as follows. Sigma factors are initiation factors that promote the attachment of plastid-encoded RNA polymerase (PEP) to specific initiation sites and are then released. Regulates transcription of the ndhF gene which codes for a subunit of the plastid NDH [NAD(P)H dehydrogenase] complex. The sequence is that of RNA polymerase sigma factor sigD, chloroplastic (SIGD) from Arabidopsis thaliana (Mouse-ear cress).